The primary structure comprises 687 residues: Cytochrome b/c1 (687 aa).

A helical transmembrane segment spans residues 46–66 (FGAILSFMLGMQILTGVILAM). Positions 96 and 110 each coordinate heme b. Helical transmembrane passes span 126–146 (VLWI…FMGY) and 160–180 (VITN…TLLW). Heme b is bound by residues His197 and His211. 6 helical membrane-spanning segments follow: residues 199-219 (LLPF…HVAG), 247-267 (FGVA…PNYL), 305-325 (LAGV…PWLD), 337-357 (LAKQ…YLGA), 363-383 (IYVI…LIVL), and 410-430 (AVAS…GSLQ). The interval 404-434 (LAKGGKAVASVAIALVAAGALFLGSLQDARA) is internal signal sequence. In terms of domain architecture, Cytochrome c spans 458 to 643 (GALQRGLKVY…TVAQYSKDVT (186 aa)). Residues Cys471, Cys474, His475, and Met616 each contribute to the heme c site. Residues 666-678 (VFLIIFAGLMYFT) traverse the membrane as a helical segment.

The protein belongs to the cytochrome b family. The main subunits of complex b-c1 are: cytochrome b, cytochrome c1 and the Rieske protein. Heme b is required as a cofactor. Requires heme c as cofactor. The protein is post-translationally processed into cytochrome b and c1. This occurs by processing between residues 434 and 435 without processing between cytochrome b and the N-terminal of the putative signal sequence domain.

It localises to the cell inner membrane. In terms of biological role, component of the ubiquinol-cytochrome c reductase complex (complex III or cytochrome b-c1 complex), which is a respiratory chain that generates an electrochemical potential coupled to ATP synthesis. c1 functions as an electron donor to cytochrome c. This is Cytochrome b/c1 (fbcH) from Bradyrhizobium diazoefficiens (strain JCM 10833 / BCRC 13528 / IAM 13628 / NBRC 14792 / USDA 110).